The primary structure comprises 1188 residues: DNA-directed RNA polymerase subunit beta (1188 aa).

Belongs to the RNA polymerase beta chain family. As to quaternary structure, the RNAP catalytic core consists of 2 alpha, 1 beta, 1 beta' and 1 omega subunit. When a sigma factor is associated with the core the holoenzyme is formed, which can initiate transcription.

The catalysed reaction is RNA(n) + a ribonucleoside 5'-triphosphate = RNA(n+1) + diphosphate. Its function is as follows. DNA-dependent RNA polymerase catalyzes the transcription of DNA into RNA using the four ribonucleoside triphosphates as substrates. This chain is DNA-directed RNA polymerase subunit beta, found in Streptococcus equi subsp. equi (strain 4047).